The following is a 305-amino-acid chain: tRNA dimethylallyltransferase (305 aa).

8 to 15 lines the ATP pocket; it reads GPTASGKT. Substrate is bound at residue 10-15; it reads TASGKT. The interval 33-36 is interaction with substrate tRNA; sequence DSQQ.

It belongs to the IPP transferase family. As to quaternary structure, monomer. The cofactor is Mg(2+).

The catalysed reaction is adenosine(37) in tRNA + dimethylallyl diphosphate = N(6)-dimethylallyladenosine(37) in tRNA + diphosphate. Catalyzes the transfer of a dimethylallyl group onto the adenine at position 37 in tRNAs that read codons beginning with uridine, leading to the formation of N6-(dimethylallyl)adenosine (i(6)A). The protein is tRNA dimethylallyltransferase of Anaeromyxobacter sp. (strain K).